The chain runs to 222 residues: Histone H1.5 (222 aa).

Residues 1–16 (MSETAPAETTAPAPVE) show a composition bias toward low complexity. The interval 1 to 55 (MSETAPAETTAPAPVEKSPAKKKTKKAGAAKRKATGPPVSELITKAVSASKERGG) is disordered. At S2 the chain carries N-acetylserine. A Phosphoserine modification is found at S2. K17 carries the N6-acetyllysine modification. S18 carries the phosphoserine modification. Residues 20 to 34 (AKKKTKKAGAAKRKA) are compositionally biased toward basic residues. K26 is subject to N6-methyllysine. An N6-(beta-hydroxybutyryl)lysine; alternate modification is found at K33. K33 carries the N6-succinyllysine; alternate modification. At T35 the chain carries Phosphothreonine. In terms of domain architecture, H15 spans 35–108 (TGPPVSELIT…GASGSFKLNK (74 aa)). An N6-acetyllysine modification is found at K45. Position 51 is an N6-(beta-hydroxybutyryl)lysine (K51). R53 is modified (citrulline). K63 is subject to N6-(beta-hydroxybutyryl)lysine. Position 74 is an N6-acetyllysine (K74). N6-(beta-hydroxybutyryl)lysine occurs at positions 84, 89, and 105. Positions 94–222 (QTKGTGASGS…KVKKAVSKKK (129 aa)) are disordered. The segment covering 118–129 (KAKKTGAAKAKK) has biased composition (basic residues). Phosphothreonine is present on residues T134 and T151. The span at 136–157 (KKPKKTAGAKKTVKKTPKKAKK) shows a compositional bias: basic residues. The residue at position 164 (K164) is an N6-acetyllysine. Residues 165–183 (KVTKSPKKAKAAAKPKKAT) are compositionally biased toward basic residues. Phosphoserine occurs at positions 169 and 185. Residues 190 to 222 (KAVKSKASKPKVTKPKAAKPKAAKVKKAVSKKK) show a composition bias toward basic residues.

This sequence belongs to the histone H1/H5 family. As to quaternary structure, interacts with MSX1. H1 histones are progressively phosphorylated during the cell cycle, becoming maximally phosphorylated during late G2 phase and M phase, and being dephosphorylated sharply thereafter. In terms of processing, citrullination at Arg-53 (H1R54ci) by PADI4 takes place within the DNA-binding site of H1 and results in its displacement from chromatin and global chromatin decondensation, thereby promoting pluripotency and stem cell maintenance.

Its subcellular location is the nucleus. The protein resides in the chromosome. Functionally, histone H1 protein binds to linker DNA between nucleosomes forming the macromolecular structure known as the chromatin fiber. Histones H1 are necessary for the condensation of nucleosome chains into higher-order structured fibers. Also acts as a regulator of individual gene transcription through chromatin remodeling, nucleosome spacing and DNA methylation. The polypeptide is Histone H1.5 (H1-5) (Rattus norvegicus (Rat)).